Here is a 215-residue protein sequence, read N- to C-terminus: Ceramide-1-phosphate transfer protein (215 aa).

An N-acylsphingoid base 1-phosphate is bound by residues D57, K61, R107, R111, and H151.

The protein belongs to the GLTP family.

The protein localises to the cytoplasm. It localises to the cytosol. It is found in the golgi apparatus. Its subcellular location is the trans-Golgi network membrane. The protein resides in the cell membrane. The protein localises to the endosome membrane. It localises to the nucleus outer membrane. It catalyses the reaction N-(hexadecanoyl)-sphing-4-enine-1-phosphate(in) = N-(hexadecanoyl)-sphing-4-enine-1-phosphate(out). The enzyme catalyses N-(9Z-octadecenoyl)-sphing-4-enine-1-phosphate(in) = N-(9Z-octadecenoyl)-sphing-4-enine-1-phosphate(out). Mediates the intracellular transfer of ceramide-1-phosphate (C1P) between organelle membranes and the cell membrane. Required for normal structure of the Golgi stacks. Can bind phosphoceramides with a variety of aliphatic chains, but has a preference for lipids with saturated C16:0 or monounsaturated C18:1 aliphatic chains, and is inefficient with phosphoceramides containing lignoceryl (C24:0). Plays a role in the regulation of the cellular levels of ceramide-1-phosphate, and thereby contributes to the regulation of phospholipase PLA2G4A activity and the release of arachidonic acid. Has no activity with galactosylceramide, lactosylceramide, sphingomyelin, phosphatidylcholine, phosphatidic acid and ceramide. C1P transfer is stimulated by phosphatidylserine in C1P source vesicles. Regulates autophagy and pyroptosis, but not apoptosis. The protein is Ceramide-1-phosphate transfer protein (cptp) of Xenopus laevis (African clawed frog).